Consider the following 270-residue polypeptide: Regulatory protein RecX (270 aa).

The protein belongs to the RecX family.

The protein resides in the cytoplasm. Modulates RecA activity. The chain is Regulatory protein RecX from Bacillus cereus (strain G9842).